Consider the following 648-residue polypeptide: RAF proto-oncogene serine/threonine-protein kinase (648 aa).

The residue at position 29 (Ser-29) is a Phosphoserine; by MAPK1. Phosphoserine; by PKA and MAPK1 is present on Ser-43. Positions Asn-56–Leu-131 constitute an RBD domain. Residues Thr-138–Cys-184 form a Phorbol-ester/DAG-type zinc finger. 8 residues coordinate Zn(2+): His-139, Cys-152, Cys-155, Cys-165, Cys-168, His-173, Cys-176, and Cys-184. The disordered stretch occupies residues Gly-205–Met-265. The residue at position 233 (Ser-233) is a Phosphoserine; by PKA. The segment covering Thr-239–Met-265 has biased composition (polar residues). Ser-252 is subject to Phosphoserine. Ser-259 is modified (phosphoserine; by PKA, PKC and PKB/AKT1). Thr-268 is subject to Phosphothreonine; by autocatalysis. Thr-269 is modified (phosphothreonine; by PKA). Residues Ile-281 to Gln-335 are disordered. Residues Glu-286–Ser-301 show a composition bias toward low complexity. Phosphoserine; by MAPK1 is present on residues Ser-289, Ser-296, and Ser-301. Residues Arg-331–Val-349 form an interaction with PEBP1/RKIP region. Ser-338 is subject to Phosphoserine; by PAK1, PAK2, PAK3 and PAK5. Ser-339 carries the post-translational modification Phosphoserine; by PAK1, PAK2 and PAK3. Residues Tyr-340 and Tyr-341 each carry the phosphotyrosine; by SRC modification. The Protein kinase domain occupies Val-349–Leu-609. Residues Ile-355–Val-363 and Lys-375 each bind ATP. The active-site Proton acceptor is the Asp-468. At Ser-471 the chain carries Phosphoserine. Residue Thr-491 is modified to Phosphothreonine. Position 494 is a phosphoserine (Ser-494). Ser-497 and Ser-499 each carry phosphoserine; by PKC. A Symmetric dimethylarginine; by PRMT5 modification is found at Arg-563. A Phosphoserine modification is found at Ser-621. Ser-642 bears the Phosphoserine; by MAPK1 mark.

The protein belongs to the protein kinase superfamily. TKL Ser/Thr protein kinase family. RAF subfamily. Monomer. Homodimer. Heterodimerizes with BRAF and this heterodimer possesses a highly increased kinase activity compared to the respective homodimers or monomers. Heterodimerization is mitogen-regulated and enhanced by 14-3-3 proteins. MAPK1/ERK2 activation can induce a negative feedback that promotes the dissociation of the heterodimer. Forms a multiprotein complex with Ras (M-Ras/MRAS), SHOC2 and protein phosphatase 1 (PPP1CA, PPP1CB and PPP1CC). Interacts with LZTR1. Interacts with Ras proteins; the interaction is antagonized by RIN1. Weakly interacts with RIT1. Interacts (via N-terminus) with RGS14 (via RBD domains); the interaction mediates the formation of a ternary complex with BRAF, a ternary complex inhibited by GNAI1. Probably forms a complex composed of chaperones HSP90 and HSP70, co-chaperones CDC37, PPP5C, TSC1 and client protein TSC2, CDK4, AKT, RAF1 and NR3C1; this complex does not contain co-chaperones STIP1/HOP and PTGES3/p23. Interacts with STK3/MST2; the interaction inhibits its pro-apoptotic activity. Interacts (when phosphorylated at Ser-259) with YWHAZ (unphosphorylated at 'Thr-232'). Interacts with MAP2K1/MEK1 and MAP2K2/MEK2. Interacts with MAP3K5/ASF1 (via N-terminus) and this interaction inhibits the proapoptotic function of MAP3K5/ASK1. Interacts with PAK1 (via kinase domain). The Ser-338 and Ser-339 phosphorylated form (by PAK1) interacts with BCL2. Interacts with PEBP1/RKIP and this interaction is enhanced if RAF1 is phosphorylated on residues Ser-338, Ser-339, Tyr-340 and Tyr-341. Interacts with ADCY2, ADCY5, ADCY6, DGKH, RCAN1/DSCR1, PPP1R12A, PKB/AKT1, SPRY2, SPRY4, CNKSR1/CNK1, KSR2 and PHB/prohibitin. The phosphorylated form interacts with PIN1. Interacts with PPP2CA, PPP2R1B and ROCK2. In its active form, interacts with PRMT5. Interacts with FAM83B; displaces 14-3-3 proteins from RAF1 and activates RAF1. Interacts with PDE8A; the interaction promotes RAF1 activity. Interacts with MFHAS1. Interacts with GLS. Interacts with NEK10 and MAP2K1; the interaction is direct with NEK10 and required for ERK1/2-signaling pathway activation in response to UV irradiation. Requires Zn(2+) as cofactor. Post-translationally, phosphorylation at Thr-269, Ser-338, Tyr-341, Thr-491 and Ser-494 results in its activation. Phosphorylation at Ser-29, Ser-43, Ser-289, Ser-296, Ser-301 and Ser-642 by MAPK1/ERK2 results in its inactivation. Phosphorylation at Ser-259 induces the interaction with YWHAZ and inactivates kinase activity. Dephosphorylation of Ser-259 by the SHOC2-MRAS-PP1c (SMP) complex consisting of SHOC2, GTP-bound M-Ras/MRAS and the catalytic subunit of protein phosphatase 1 (PPP1CA, PPP1CB or PPP1CC); this relieves inactivation and stimulates kinase activity. Phosphorylation at Ser-338 by PAK1 and PAK5 and Ser-339 by PAK1 is required for its mitochondrial localization. Phosphorylation at Ser-621 in response to growth factor treatment stabilizes the protein, possibly by preventing proteasomal degradation. Phosphorylation at Ser-289, Ser-296, Ser-301, Ser-338 and Ser-621 are somehow linked to the methylation potential of cells. Treatment of cells with HGF in the presence of the methylation inhibitor 5'-methylthioadenosine (MTA) results in increased phosphorylation at Ser-338 and Ser-621 and decreased phosphorylation at Ser-296, Ser-301 and Ser-338. Dephosphorylation at Ser-338 by PPP5C results in a decreased of activity. Methylated at Arg-563 in response to EGF treatment. This modification leads to destabilization of the protein, possibly through proteasomal degradation. In terms of tissue distribution, present in all tissues tested: testis, ovary, small intestine, colon, peripheral blood leukocytes, fetal liver, bone marrow, thymus, lymph node and spleen, and the cell lines melanoma G-361, lung carcinoma A-549, colorectal adenocarcinoma SW480, Burkitt's lymphoma Raji and lymphoblastic leukemia MOLT-4. In skeletal muscle, isoform 1 is more abundant than isoform 2.

The protein localises to the cytoplasm. It localises to the cell membrane. It is found in the mitochondrion. The protein resides in the nucleus. It carries out the reaction L-seryl-[protein] + ATP = O-phospho-L-seryl-[protein] + ADP + H(+). The catalysed reaction is L-threonyl-[protein] + ATP = O-phospho-L-threonyl-[protein] + ADP + H(+). With respect to regulation, regulation is a highly complex process involving membrane recruitment, protein-protein interactions, dimerization, and phosphorylation/dephosphorylation events. Ras-GTP recruits RAF1 to the membrane, thereby promoting its activation. The inactive conformation of RAF1 is maintained by autoinhibitory interactions occurring between the N-terminal regulatory and the C-terminal catalytic domains and by the binding of a 14-3-3 protein that contacts two phosphorylation sites, Ser-259 and Ser-621. Upon mitogenic stimulation, Ras and PPP2R1A cooperate to release autoinhibition and the subsequent phosphorylation of activating sites: Ser-338, Tyr-341, Thr-491, and Ser-494, yields a fully active kinase. Through a negative feedback mechanism involving MAPK1/ERK2, RAF1 is phosphorylated on Ser-29, Ser-43, Ser-289, Ser-296, Ser-301 and Ser-642 by MAPK1/ERK2, which yields an inactive, desensitized kinase. The signaling-competent conformation of RAF1 is finally re-established by the coordinated action of PIN1, a prolyl isomerase that converts pSer and pThr residues from the cis to the trans conformation, which is preferentially recognized and dephosphorylated by PPP2R1A. Activated by homodimerization and heterodimerization (with BRAF). Also regulated through association with other proteins such as KSR2, CNKSR1/CNK1, PEBP1/RKIP, PHB/prohibitin and SPRY4. PEBP1/RKIP acts by dissociating RAF1 from its substrates MAP2K1/MEK1 and MAP2K2/MEK2. PHB/prohibitin facilitates the displacement of 14-3-3 from RAF1 by activated Ras, thereby promoting cell membrane localization and phosphorylation of RAF1 at the activating Ser-338. SPRY4 inhibits Ras-independent, but not Ras-dependent, activation of RAF1. CNKSR1/CNK1 regulates Src-mediated RAF1 activation. In terms of biological role, serine/threonine-protein kinase that acts as a regulatory link between the membrane-associated Ras GTPases and the MAPK/ERK cascade, and this critical regulatory link functions as a switch determining cell fate decisions including proliferation, differentiation, apoptosis, survival and oncogenic transformation. RAF1 activation initiates a mitogen-activated protein kinase (MAPK) cascade that comprises a sequential phosphorylation of the dual-specific MAPK kinases (MAP2K1/MEK1 and MAP2K2/MEK2) and the extracellular signal-regulated kinases (MAPK3/ERK1 and MAPK1/ERK2). The phosphorylated form of RAF1 (on residues Ser-338 and Ser-339, by PAK1) phosphorylates BAD/Bcl2-antagonist of cell death at 'Ser-75'. Phosphorylates adenylyl cyclases: ADCY2, ADCY5 and ADCY6, resulting in their activation. Phosphorylates PPP1R12A resulting in inhibition of the phosphatase activity. Phosphorylates TNNT2/cardiac muscle troponin T. Can promote NF-kB activation and inhibit signal transducers involved in motility (ROCK2), apoptosis (MAP3K5/ASK1 and STK3/MST2), proliferation and angiogenesis (RB1). Can protect cells from apoptosis also by translocating to the mitochondria where it binds BCL2 and displaces BAD/Bcl2-antagonist of cell death. Plays a role in the oncogenic transformation of epithelial cells via repression of the TJ protein, occludin (OCLN) by inducing the up-regulation of a transcriptional repressor SNAI2/SLUG, which induces down-regulation of OCLN. Restricts caspase activation in response to selected stimuli, notably Fas stimulation, pathogen-mediated macrophage apoptosis, and erythroid differentiation. Regulates Rho signaling and migration, and is required for normal wound healing. The polypeptide is RAF proto-oncogene serine/threonine-protein kinase (Raf1) (Mus musculus (Mouse)).